Consider the following 247-residue polypeptide: Sugar fermentation stimulation protein homolog (247 aa).

Belongs to the SfsA family.

This Aeromonas hydrophila subsp. hydrophila (strain ATCC 7966 / DSM 30187 / BCRC 13018 / CCUG 14551 / JCM 1027 / KCTC 2358 / NCIMB 9240 / NCTC 8049) protein is Sugar fermentation stimulation protein homolog.